We begin with the raw amino-acid sequence, 122 residues long: Small ribosomal subunit protein uS13 (122 aa).

The segment at 97 to 122 (PCRGQRTKTNARTRKGPARTVAGKKK) is disordered.

The protein belongs to the universal ribosomal protein uS13 family. As to quaternary structure, part of the 30S ribosomal subunit. Forms a loose heterodimer with protein S19. Forms two bridges to the 50S subunit in the 70S ribosome.

In terms of biological role, located at the top of the head of the 30S subunit, it contacts several helices of the 16S rRNA. In the 70S ribosome it contacts the 23S rRNA (bridge B1a) and protein L5 of the 50S subunit (bridge B1b), connecting the 2 subunits; these bridges are implicated in subunit movement. Contacts the tRNAs in the A and P-sites. The protein is Small ribosomal subunit protein uS13 of Geobacter sp. (strain M21).